The following is a 447-amino-acid chain: Probable alpha-galactosidase B (447 aa).

An N-terminal signal peptide occupies residues 1–22 (MTTFLSLTTAAAVLTLARGSNA). Cystine bridges form between C45/C77 and C127/C157. The active-site Nucleophile is the D155. 2 N-linked (GlcNAc...) asparagine glycosylation sites follow: N162 and N180. 225–229 (NWGQA) lines the substrate pocket. An N-linked (GlcNAc...) asparagine glycan is attached at N236. The Proton donor role is filled by D247. A glycan (N-linked (GlcNAc...) asparagine) is linked at N286.

Belongs to the glycosyl hydrolase 27 family.

The protein resides in the secreted. It catalyses the reaction Hydrolysis of terminal, non-reducing alpha-D-galactose residues in alpha-D-galactosides, including galactose oligosaccharides, galactomannans and galactolipids.. Its function is as follows. Hydrolyzes a variety of simple alpha-D-galactoside as well as more complex molecules such as oligosaccharides and polysaccharides. In Neosartorya fischeri (strain ATCC 1020 / DSM 3700 / CBS 544.65 / FGSC A1164 / JCM 1740 / NRRL 181 / WB 181) (Aspergillus fischerianus), this protein is Probable alpha-galactosidase B (aglB).